Reading from the N-terminus, the 221-residue chain is GTP-binding nuclear protein Ran-1 (221 aa).

The Small GTPase Ran-type domain maps to 10 to 174; it reads DYPSFKLVIV…LYLARKLAGD (165 aa). A GTP-binding site is contributed by 21-28; that stretch reads DGGTGKTT. Residues 40 to 48 are switch-I; the sequence is KKYEPTIGV. Residues Gly71, 125–128, and 153–155 each bind GTP; these read NKVD and SAK. Residues 71 to 87 are switch-II; the sequence is GQEKFGGLRDGYYIHGQ.

It belongs to the small GTPase superfamily. Ran family. As to quaternary structure, found in a nuclear export complex with RanGTP, exportin and pre-miRNA. Interacts with RANBP1A and RANBP1B. Interacts with TRN1. Interacts with ATX1. Interacts with KPNB1. Binds to XPO1. Interacts with MOS14. Binds to NTF2B.

Its subcellular location is the nucleus. Its function is as follows. GTP-binding protein involved in nucleocytoplasmic transport. Required for the import of protein into the nucleus and also for RNA export. Involved in chromatin condensation and control of cell cycle. In Arabidopsis thaliana (Mouse-ear cress), this protein is GTP-binding nuclear protein Ran-1 (RAN1).